Here is a 144-residue protein sequence, read N- to C-terminus: Large ribosomal subunit protein uL15 (144 aa).

The interval 1–54 (MHLNTLKPAEGAKKLAKRKGRGQGSGNGKMAGRGHKGQKSRSGGMPKIGFEGGQ) is disordered. Gly residues predominate over residues 22–31 (GQGSGNGKMA).

This sequence belongs to the universal ribosomal protein uL15 family. Part of the 50S ribosomal subunit.

Its function is as follows. Binds to the 23S rRNA. In Hydrogenovibrio crunogenus (strain DSM 25203 / XCL-2) (Thiomicrospira crunogena), this protein is Large ribosomal subunit protein uL15.